Consider the following 503-residue polypeptide: Protein O-glucosyltransferase 3 (503 aa).

The first 19 residues, 1–19 (MQALPLGLQLALLVAAGAG), serve as a signal peptide directing secretion. The stretch at 19–129 (GARVSAPRSL…VAHSPYILKG (111 aa)) is one Filamin repeat. N-linked (GlcNAc...) asparagine glycans are attached at residues asparagine 56 and asparagine 302. Residues 500–503 (REEL) carry the Prevents secretion from ER motif.

The protein belongs to the KDELC family.

The protein localises to the endoplasmic reticulum lumen. The enzyme catalyses L-seryl-[EGF-like domain protein] + UDP-alpha-D-glucose = 3-O-(beta-D-glucosyl)-L-seryl-[EGF-like domain protein] + UDP + H(+). It catalyses the reaction L-seryl-[EGF-like domain protein] + UDP-alpha-D-xylose = 3-O-(beta-D-xylosyl)-L-seryl-[EGF-like domain protein] + UDP + H(+). It functions in the pathway protein modification; protein glycosylation. Functionally, protein glucosyltransferase that catalyzes the transfer of glucose from UDP-glucose to a serine residue within the consensus sequence peptide C-X-N-T-X-G-S-F-X-C. Can also catalyze the transfer of xylose from UDP-xylose but less efficiently. Specifically targets extracellular EGF repeats of proteins such as NOTCH1, NOTCH3, FBN1, FBN2 and LTBP1. May regulate the transport of NOTCH1 and NOTCH3 to the plasma membrane and thereby the Notch signaling pathway. The chain is Protein O-glucosyltransferase 3 (Poglut3) from Mus musculus (Mouse).